Here is a 436-residue protein sequence, read N- to C-terminus: 3-hydroxy-3-methylglutaryl-coenzyme A reductase (436 aa).

Residues Glu99, Lys277, and Asp293 each act as charge relay system in the active site. Residue His390 is the Proton donor of the active site.

It belongs to the HMG-CoA reductase family.

It carries out the reaction (R)-mevalonate + 2 NADP(+) + CoA = (3S)-3-hydroxy-3-methylglutaryl-CoA + 2 NADPH + 2 H(+). The protein operates within metabolic intermediate biosynthesis; (R)-mevalonate biosynthesis; (R)-mevalonate from acetyl-CoA: step 3/3. Its function is as follows. Converts HMG-CoA to mevalonate. The sequence is that of 3-hydroxy-3-methylglutaryl-coenzyme A reductase (hmgA) from Archaeoglobus fulgidus (strain ATCC 49558 / DSM 4304 / JCM 9628 / NBRC 100126 / VC-16).